A 139-amino-acid chain; its full sequence is MAVAAVKWVMSKRTILKHLFPVQNGALYCVCHKSTYSPLPDDYNCSVELALTSDGRTIVCYHPSVDIPYEHTKPIPRPDPVHNNEETHDQVLKTRLEEKVEHLEEGPMIEQLSKMFFTTKHRWYPHGRCRKNLNPPKDR.

The transit peptide at Met1–His32 directs the protein to the mitochondrion.

The protein belongs to the mitochondrion-specific ribosomal protein mL42 family. In terms of assembly, component of the mitochondrial ribosome large subunit (39S) which comprises a 16S rRNA and about 50 distinct proteins. Component of the mitochondrial ribosome small subunit (28S) which comprises a 12S rRNA and about 30 distinct proteins.

It is found in the mitochondrion. The protein is Large ribosomal subunit protein mL42 (MRPL42) of Pongo abelii (Sumatran orangutan).